The following is a 715-amino-acid chain: Solute carrier organic anion transporter family member 1C1 (715 aa).

The Cytoplasmic portion of the chain corresponds to 1 to 43 (MDTSSKENAHLFHKNSAQPAGGPSFTVGYPSTEEARPCCGKLK). A helical membrane pass occupies residues 44–63 (VFLGALSFVYFAKALAEGYL). Residues 64–82 (KSTVTQIERRFEIPSSLVG) lie on the Extracellular side of the membrane. The helical transmembrane segment at 83–103 (IIDGSFEIGNLLVITFVSYFG) threads the bilayer. Over 104-109 (AKLHRP) the chain is Cytoplasmic. Residues 110–134 (KIIGAGCLVMGFGTMLIAVPQFFME) form a helical membrane-spanning segment. Residues 135–187 (KYSYEKYERYSPSSNVTPSISPCYLESSSPSPSSILGKSQNKISHECVGDSSS) lie on the Extracellular side of the membrane. The helical transmembrane segment at 188 to 216 (SMWVYVFLGNLLRGLGETPIQPLGIAYLD) threads the bilayer. Residues 217–235 (DFASEDNAAFYIGCVQTVA) are Cytoplasmic-facing. The helical transmembrane segment at 236 to 256 (IIGPIFGFLLGSLCAKLYVDI) threads the bilayer. Over 257 to 274 (GFVNLDHITITPKDPQWV) the chain is Extracellular. Residues 275-299 (GAWWLGYLIAGFLSLLAAVPFWCLP) form a helical membrane-spanning segment. Over 300–351 (KTLPRSQSRENSGSTSEKSKFIDDPIHYQMAPGDDKMKIMEMAKDFLPSLKT) the chain is Cytoplasmic. Residues 352 to 373 (LFRNPVYILYLCASTVQFNSLF) traverse the membrane as a helical segment. Over 374–393 (GMVTYKPKYIEQQYGQSSSK) the chain is Extracellular. The helical transmembrane segment at 394-417 (ANFVIGLINIPAVALGIFSGGIVM) threads the bilayer. At 418–421 (KKFR) the chain is on the cytoplasmic side. The helical transmembrane segment at 422 to 445 (LGICEATKLYLGSSVFGYLLFLSL) threads the bilayer. Topologically, residues 446 to 557 (FALGCENSSV…NGCSQMFLYF (112 aa)) are extracellular. Asn-452 carries N-linked (GlcNAc...) asparagine glycosylation. Positions 473–528 (RALFSDCNSRCKCSDSKWEPMCGDNGITYVSACLAGCQSSSRSGKNIIFSNCTCVG) constitute a Kazal-like domain. 3 disulfide bridges follow: Cys-479/Cys-509, Cys-485/Cys-505, and Cys-494/Cys-526. Asn-523 and Asn-536 each carry an N-linked (GlcNAc...) asparagine glycan. The chain crosses the membrane as a helical span at residues 558 to 580 (LVISVITSYTLSLGGIPGYILLL). Residues 581-589 (RCIQPQLKS) are Cytoplasmic-facing. Residues 590-615 (FALGIYTLAVRVLAGIPAPVYFGVLI) form a helical membrane-spanning segment. The Extracellular portion of the chain corresponds to 616 to 649 (DTSCLKWGFKKCGSRGSCRLYDSHAFRHIYLGLT). A helical membrane pass occupies residues 650–667 (TLLGTVSVFLSMAVLFVL). Residues 668-715 (KKKYVSKHSSLITTREKIGMSSSIKKETCAARDRGLQPKYWPGKETRL) lie on the Cytoplasmic side of the membrane.

This sequence belongs to the organo anion transporter (TC 2.A.60) family. Widely expressed throughout the brain except in the cerebellum. Not detected in kidney, heart, lung, skeletal muscle, spleen, liver, nor testis. Highly expressed in cerebral microvessels throughout the brain and in the choroid plexus (at mRNA and protein level).

The protein resides in the cell membrane. The enzyme catalyses 3,3',5'-triiodo-L-thyronine(out) = 3,3',5'-triiodo-L-thyronine(in). It catalyses the reaction L-thyroxine(out) = L-thyroxine(in). The catalysed reaction is L-thyroxine sulfate(out) = L-thyroxine sulfate(in). It carries out the reaction 17beta-estradiol 17-O-(beta-D-glucuronate)(out) = 17beta-estradiol 17-O-(beta-D-glucuronate)(in). The enzyme catalyses 3,3',5-triiodo-L-thyronine(out) = 3,3',5-triiodo-L-thyronine(in). In terms of biological role, mediates the Na(+)-independent high affinity transport of thyroid hormones at the plasma membrane of brain capillary endothelial cells. The transport activity of substrates L-thyroxine (T4) and 3,3',5'-triiodo-L-thyronine (reverse T3, rT3) is much greater than that of 3,3',5-triiodo-L-thyronine (T3). The prehormone, T4, is the major form in the circulating blood and is converted to the active form, T3, by the iodothyronine-deiodinase in peripheral organs. T3 plays an essential role in brain development via binding to specific nuclear receptors (thyroid hormone receptor). Also transports organic anions such as the conjugated steroid 17-beta-glucuronosyl estradiol (17beta-estradiol 17-O-(beta-D-glucuronate)). Transports T4 and estrone-3-sulfate in a pH-insensitive manner. May serve as a drug efflux system at the blood brain barrier. This Mus musculus (Mouse) protein is Solute carrier organic anion transporter family member 1C1 (Slco1c1).